Here is a 183-residue protein sequence, read N- to C-terminus: Photosystem I assembly protein Ycf4 (183 aa).

2 consecutive transmembrane segments (helical) span residues 21–43 (YIWG…SSYL) and 63–85 (LVMC…LILW).

The protein belongs to the Ycf4 family.

It is found in the plastid. It localises to the chloroplast thylakoid membrane. Its function is as follows. Seems to be required for the assembly of the photosystem I complex. The chain is Photosystem I assembly protein Ycf4 from Chlorella vulgaris (Green alga).